The primary structure comprises 1058 residues: Bromodomain-containing protein 1 (1058 aa).

Positions 1–12 (MRRKGRCHRGSA) are enriched in basic residues. Positions 1–26 (MRRKGRCHRGSAARHPSSPCSVKHSP) are disordered. The interaction with KAT7/HBO1 and histones stretch occupies residues 31-80 (LTYAQAQRMVEIEIEGRLHRISIFDPLEIILEDDLTAQEMSECNSNKENS). A disordered region spans residues 92-116 (HKNNRVKKKNEALPSAHGTPASASA). Phosphoserine is present on Ser-128. A PHD-type 1 zinc finger spans residues 214–264 (DAVCCICMDGECQNSNVILFCDMCNLAVHQECYGVPYIPEGQWLCRHCLQS). A C2HC pre-PHD-type zinc finger spans residues 268 to 301 (PADCVLCPNKGGAFKKTDDDRWGHVVCALWIPEV). The PHD-type 2 zinc-finger motif lies at 325–389 (LTCYLCKQKG…RKTAYCDVHT (65 aa)). Residues Lys-368, Lys-516, and Lys-519 each carry the N6-acetyllysine modification. Glycyl lysine isopeptide (Lys-Gly) (interchain with G-Cter in SUMO2) cross-links involve residues Lys-554 and Lys-594. The Bromo domain occupies 562–666 (LRLTPLTVLL…DQGGVVLRQA (105 aa)). Disordered stretches follow at residues 755 to 776 (LSQQ…EEDG) and 791 to 868 (LETL…DSSF). Phosphoserine is present on Ser-803. A compositionally biased stretch (low complexity) spans 852–867 (SESSISSSNSPLCDSS). Lys-903 is subject to N6-acetyllysine. Residue Arg-906 is modified to Phosphoserine. A PWWP domain is found at 929 to 1012 (PLKVVWAKCS…KSKMVPLGID (84 aa)). Residues Ser-1052 and Ser-1055 each carry the phosphoserine modification.

In terms of assembly, component of some HBO1 complex composed of KAT7/HBO1, MEAF6, ING4 and BRD1/BRPF2. Component of the MOZ/MORF complex composed at least of ING5, KAT6A, KAT6B, MEAF6 and one of BRPF1, BRD1/BRPF2 and BRPF3. Interacts (via PHD-type zinc finger domain) with unmodified histone H3. Interacts (via PWWP domain) with dimethylated and trimethylated 'Lys-79' on histone H3. Highly expressed in testis.

It is found in the nucleus. Its subcellular location is the chromosome. In terms of biological role, scaffold subunit of various histone acetyltransferase (HAT) complexes, such as the MOZ/MORF and HBO1 complexes, that acts as a regulator of hematopoiesis. Plays a key role in HBO1 complex by directing KAT7/HBO1 specificity towards histone H3 'Lys-14' acetylation (H3K14ac), thereby promoting erythroid differentiation. This Homo sapiens (Human) protein is Bromodomain-containing protein 1.